We begin with the raw amino-acid sequence, 583 residues long: Protein LONG AFTER FAR-RED 3 (583 aa).

A helical transmembrane segment spans residues 7–27 (FPVMIGFVSAAVFLLISVAYL). N-linked (GlcNAc...) asparagine glycans are attached at residues Asn-55 and Asn-374.

Belongs to the metallo-dependent hydrolases superfamily. In terms of tissue distribution, expressed at low level in seedlings, roots, leaves, stems, flowers, and siliques.

It is found in the membrane. The protein localises to the cytoplasm. It localises to the perinuclear region. Functionally, required for phyA-controlled responses to continuous far-red light (FRc) conditions, including the inhibition of hypocotyl elongation and the regulation of XTH15/XTR7 expression. This is Protein LONG AFTER FAR-RED 3 from Arabidopsis thaliana (Mouse-ear cress).